We begin with the raw amino-acid sequence, 179 residues long: NAD(P)H-quinone oxidoreductase subunit I, chloroplastic (179 aa).

2 consecutive 4Fe-4S ferredoxin-type domains span residues 55–84 (GRIH…VDWR) and 95–124 (LNYS…MTEE). Residues cysteine 64, cysteine 67, cysteine 70, cysteine 74, cysteine 104, cysteine 107, cysteine 110, and cysteine 114 each contribute to the [4Fe-4S] cluster site.

Belongs to the complex I 23 kDa subunit family. NDH is composed of at least 16 different subunits, 5 of which are encoded in the nucleus. It depends on [4Fe-4S] cluster as a cofactor.

The protein localises to the plastid. Its subcellular location is the chloroplast thylakoid membrane. It carries out the reaction a plastoquinone + NADH + (n+1) H(+)(in) = a plastoquinol + NAD(+) + n H(+)(out). The enzyme catalyses a plastoquinone + NADPH + (n+1) H(+)(in) = a plastoquinol + NADP(+) + n H(+)(out). Functionally, NDH shuttles electrons from NAD(P)H:plastoquinone, via FMN and iron-sulfur (Fe-S) centers, to quinones in the photosynthetic chain and possibly in a chloroplast respiratory chain. The immediate electron acceptor for the enzyme in this species is believed to be plastoquinone. Couples the redox reaction to proton translocation, and thus conserves the redox energy in a proton gradient. The chain is NAD(P)H-quinone oxidoreductase subunit I, chloroplastic from Nuphar advena (Common spatterdock).